Here is a 148-residue protein sequence, read N- to C-terminus: UPF0756 membrane protein KPK_3307 (148 aa).

The next 4 membrane-spanning stretches (helical) occupy residues 14–34 (ALGF…LIIV), 51–71 (LTVG…SGTL), 86–106 (LLAI…VSLM), and 121–141 (VLGV…AGII).

This sequence belongs to the UPF0756 family.

Its subcellular location is the cell membrane. This is UPF0756 membrane protein KPK_3307 from Klebsiella pneumoniae (strain 342).